The sequence spans 153 residues: Probable succinate transporter subunit YjjB (153 aa).

The next 4 membrane-spanning stretches (helical) occupy residues tryptophan 7–phenylalanine 27, methionine 51–isoleucine 71, valine 83–isoleucine 103, and phenylalanine 125–tryptophan 145.

This sequence belongs to the ThrE exporter (TC 2.A.79) family. The transporter is composed of YjjB and YjjP.

It localises to the cell inner membrane. Its function is as follows. Involved in succinate export with YjjP. Both proteins are required for export. The sequence is that of Probable succinate transporter subunit YjjB from Yersinia pestis bv. Antiqua (strain Antiqua).